A 444-amino-acid chain; its full sequence is Ribulose bisphosphate carboxylase (444 aa).

The active-site Proton acceptor is Lys163. Lys165 serves as a coordination point for substrate. Positions 189, 191, and 192 each coordinate Mg(2+). Lys189 carries the N6-carboxylysine modification. Catalysis depends on His281, which acts as the Proton acceptor. Substrate-binding positions include Arg282, His314, Ser367–Gly369, and Gln389–Gly392.

It belongs to the RuBisCO large chain family. Type III subfamily. As to quaternary structure, homodimer or homodecamer. In contrast to form I RuBisCO, the form III RuBisCO is composed solely of large subunits. The cofactor is Mg(2+).

It catalyses the reaction 2 (2R)-3-phosphoglycerate + 2 H(+) = D-ribulose 1,5-bisphosphate + CO2 + H2O. The catalysed reaction is D-ribulose 1,5-bisphosphate + O2 = 2-phosphoglycolate + (2R)-3-phosphoglycerate + 2 H(+). In terms of biological role, catalyzes the addition of molecular CO(2) and H(2)O to ribulose 1,5-bisphosphate (RuBP), generating two molecules of 3-phosphoglycerate (3-PGA). Functions in an archaeal AMP degradation pathway, together with AMP phosphorylase and R15P isomerase. The chain is Ribulose bisphosphate carboxylase from Thermococcus onnurineus (strain NA1).